We begin with the raw amino-acid sequence, 450 residues long: Keratin, type I cytoskeletal 25 (450 aa).

The disordered stretch occupies residues 1–24 (MSLRLPSGSRRASPRPTTGSLRLS). Residues 1–78 (MSLRLPSGSR…MNEGGLLSGN (78 aa)) are head. The interval 79–114 (EKVTMQNLNDRLASYLENVRALEEANADLEQKIKGW) is coil 1A. Residues 79 to 394 (EKVTMQNLND…LLIGGDDGAC (316 aa)) enclose the IF rod domain. A linker 1 region spans residues 115 to 136 (YEKFGPGSCRGLDHDYSRYFPI). Residues 137 to 228 (IEDLKNQIIA…KNHKEEMQVL (92 aa)) are coil 1B. Residues 229-251 (QCAAGGNVNVEMNAAPGVDLTVL) form a linker 12 region. The segment at 252 to 390 (LNNMRAEYEA…ETYCLLIGGD (139 aa)) is coil 2. A tail region spans residues 391–450 (DGACKSGGYKSKDYAAGNMGNQMKDPIKAIVVKKVLEEVDQRSKILTTRLHSLEEKSQSN). Residue S442 is modified to Phosphoserine.

It belongs to the intermediate filament family. Heterodimer of a type I and a type II keratin. Heterodimer with type II keratin KRT5 leading to the formation of keratin intermediate filament (KIF) network. Interacts with KRT6A to form filaments.

Its subcellular location is the cytoplasm. Functionally, essential for the proper assembly of type I and type II keratin protein complexes and formation of keratin intermediate filaments in the inner root sheath (irs). Plays a role in the cytoskeleton organization. This chain is Keratin, type I cytoskeletal 25, found in Capra hircus (Goat).